Reading from the N-terminus, the 146-residue chain is D-aminoacyl-tRNA deacylase (146 aa).

Residues 138 to 139 carry the Gly-cisPro motif, important for rejection of L-amino acids motif; the sequence is GP.

This sequence belongs to the DTD family. Homodimer.

Its subcellular location is the cytoplasm. The catalysed reaction is glycyl-tRNA(Ala) + H2O = tRNA(Ala) + glycine + H(+). It carries out the reaction a D-aminoacyl-tRNA + H2O = a tRNA + a D-alpha-amino acid + H(+). In terms of biological role, an aminoacyl-tRNA editing enzyme that deacylates mischarged D-aminoacyl-tRNAs. Also deacylates mischarged glycyl-tRNA(Ala), protecting cells against glycine mischarging by AlaRS. Acts via tRNA-based rather than protein-based catalysis; rejects L-amino acids rather than detecting D-amino acids in the active site. By recycling D-aminoacyl-tRNA to D-amino acids and free tRNA molecules, this enzyme counteracts the toxicity associated with the formation of D-aminoacyl-tRNA entities in vivo and helps enforce protein L-homochirality. This chain is D-aminoacyl-tRNA deacylase, found in Xanthomonas oryzae pv. oryzae (strain MAFF 311018).